Reading from the N-terminus, the 647-residue chain is Chaperone protein DnaK (647 aa).

Position 198 is a phosphothreonine; by autocatalysis (T198). The disordered stretch occupies residues 603–647; sequence EQAQGAGGAQGFDPNAFQGGDAGQQQKADDGVVDAEFTEVKDDKK. The segment covering 618 to 628 has biased composition (low complexity); that stretch reads AFQGGDAGQQQ.

This sequence belongs to the heat shock protein 70 family.

In terms of biological role, acts as a chaperone. This Acinetobacter baylyi (strain ATCC 33305 / BD413 / ADP1) protein is Chaperone protein DnaK.